We begin with the raw amino-acid sequence, 198 residues long: Cyclin-dependent kinase inhibitor 1B (198 aa).

The segment covering 1–12 (MSNVRVSNGSPT) has biased composition (polar residues). The disordered stretch occupies residues 1 to 30 (MSNVRVSNGSPTSERRDAKQAEYPKPSACR). At Ser-10 the chain carries Phosphoserine; by UHMK1. A compositionally biased stretch (basic and acidic residues) spans 13 to 22 (SERRDAKQAE). An interaction with CDK2 region spans residues 51–91 (DMEEASQNKWNFDFQNHKPLEGKYEWQEVEKGSLPEFYYRP). Tyr-74 is modified (phosphotyrosine; by SRC). The segment at 87–198 (FYYRPPRPPK…KKPGLRRRQT (112 aa)) is disordered. At Tyr-88 the chain carries Phosphotyrosine; by ABL, LYN and SRC. Residue Tyr-89 is modified to Phosphotyrosine. Positions 104–113 (QESQDVSGTR) are enriched in polar residues. Over residues 126–137 (EDTHLVDQKTDA) the composition is skewed to basic and acidic residues. The Nuclear localization signal signature appears at 153-169 (KRPATDDSSPQNKRANR). A Phosphothreonine; by CaMK1, PKB/AKT1 and PIM1 modification is found at Thr-157. A Phosphothreonine modification is found at Thr-170. Positions 175-186 (SDGSPNAGSVEQ) are enriched in polar residues. Position 187 is a phosphothreonine; by PKB/AKT1, CDK1 and CDK2 (Thr-187). Thr-198 is subject to Phosphothreonine; by CaMK1, PKB/AKT1, RPS6KA1, RPS6KA3 and PIM1.

Belongs to the CDI family. Forms a ternary complex composed of CCNE1, CDK2 and CDKN1B. Interacts directly with CCNE1; the interaction is inhibited by CDK2-dependent phosphorylation on Thr-187. Interacts with COPS5, subunit of the COP9 signalosome complex; the interaction leads to CDKN1B degradation. Interacts with NUP50; the interaction leads to nuclear import and degradation of phosphorylated CDKN1B. Interacts with CCND1 and SNX6. Interacts (Thr-198-phosphorylated form) with 14-3-3 proteins, binds strongly YWHAQ, weakly YWHAE and YWHAH, but not YWHAB nor YWHAZ; the interaction with YWHAQ results in translocation to the cytoplasm. Interacts with AKT1 and LYN; the interactions lead to cytoplasmic mislocation, phosphorylation of CDKN1B and inhibition of cell cycle arrest. Forms a ternary complex with CCNA2 and CDK2; CDKN1B inhibits the kinase activity of CDK2 through conformational rearrangements. Interacts (unphosphorylated form) with CDK2. Forms a complex with CDK2 and SPDYA, but does not directly interact with SPDYA. Forms a ternary complex composed of cyclin D, CDK4 and CDKN1B. Interacts (phosphorylated on Tyr-88 and Tyr-89) with CDK4; the interaction is required for cyclin D and CDK4 complex assembly, induces nuclear translocation and activates the CDK4 kinase activity. Interacts with GRB2. Interacts with PIM1. Identified in a complex with SKP1, SKP2 and CKS1B. Interacts with UHMK1; the interaction leads to cytoplasmic mislocation, phosphorylation of CDKN1B and inhibition of cell cycle arrest. Also interacts with CDK1. Dephosphorylated on Thr-187 by PPM1H, leading to CDKN1B stability. Phosphorylated; phosphorylation occurs on serine, threonine and tyrosine residues. Phosphorylation on Ser-10 is the major site of phosphorylation in resting cells, takes place at the G(0)-G(1) phase and leads to protein stability. Phosphorylation on other sites is greatly enhanced by mitogens, growth factors, cMYC and in certain cancer cell lines. The phosphorylated form found in the cytoplasm is inactivate. Phosphorylation on Thr-198 is required for interaction with 14-3-3 proteins. Phosphorylation on Thr-187, by CDK1 and CDK2 leads to protein ubiquitination and proteasomal degradation. Tyrosine phosphorylation promotes this process. Phosphorylation by PKB/AKT1 can be suppressed by LY294002, an inhibitor of the catalytic subunit of PI3K. Phosphorylation on Tyr-88 and Tyr-89 has no effect on binding CDK2, but is required for binding CDK4. Dephosphorylated on tyrosine residues by G-CSF. Dephosphorylated on Thr-187 by PPM1H, leading to CDKN1B stability. Post-translationally, ubiquitinated; in the cytoplasm by the KPC complex (composed of RNF123/KPC1 and UBAC1/KPC2) and, in the nucleus, by SCF(SKP2). The latter requires prior phosphorylation on Thr-187. Ubiquitinated; by a TRIM21-containing SCF(SKP2)-like complex; leads to its degradation. In terms of processing, subject to degradation in the lysosome. Interaction with SNX6 promotes lysosomal degradation.

It localises to the nucleus. The protein resides in the cytoplasm. Its subcellular location is the endosome. Functionally, important regulator of cell cycle progression. Inhibits the kinase activity of CDK2 bound to cyclin A, but has little inhibitory activity on CDK2 bound to SPDYA. Involved in G1 arrest. Potent inhibitor of cyclin E- and cyclin A-CDK2 complexes. Forms a complex with cyclin type D-CDK4 complexes and is involved in the assembly, stability, and modulation of CCND1-CDK4 complex activation. Acts either as an inhibitor or an activator of cyclin type D-CDK4 complexes depending on its phosphorylation state and/or stoichometry. The sequence is that of Cyclin-dependent kinase inhibitor 1B (CDKN1B) from Canis lupus familiaris (Dog).